Here is a 502-residue protein sequence, read N- to C-terminus: MTEKKYIVALDQGTTSSRAVVMDHDANIVSVSQREFEQIYPKPGWVEHDPMEIWASQSSTLVEVLAKADISSDQIAAIGITNQRETAIVWERETGKPIYNAIVWQCRRTADICEQLKRDGLEDYIRDNTGLVVDPYFSGTKVKWILDHVEGSRERAKRGELLFGTVDTWLIWKMTQGRVHVTDYTNASRTMLFNIHDLDWDDKMLDVLDIPRAMLPQVRKSSEVYGQTNIGGKGGTRIPIAGIAGDQQAALFGQLCVKEGMAKNTYGTGCFMLMNTGEKAVKSENGLLTTIACGPSGEVNYALEGAVFMAGASIQWLRDEMKLISDAFDSEYFATKVKDTNGVYVVPAFTGLGAPYWDPYARGAIFGLTRGVNSNHIIRATLESIAYQTRDVLEAMQADSGIRLHALRVDGGAVANNFLMQFQSDILGTRVERPEVREVTALGAAYLAGLAVGYWQNLDELQEKAVIEREFRPGIETTERNYRYSGWKKAVKRAMAWEEHDK.

T14 provides a ligand contact to ADP. 3 residues coordinate ATP: T14, T15, and S16. T14 lines the sn-glycerol 3-phosphate pocket. R18 is a binding site for ADP. Positions 84, 85, 136, and 246 each coordinate sn-glycerol 3-phosphate. Positions 84, 85, 136, 246, and 247 each coordinate glycerol. T268 and G311 together coordinate ADP. Residues T268, G311, Q315, and G412 each contribute to the ATP site. ADP-binding residues include G412 and N416.

Belongs to the FGGY kinase family. As to quaternary structure, homotetramer and homodimer (in equilibrium). Heterodimer with EIIA-Glc. Binds 1 zinc ion per glycerol kinase EIIA-Glc dimer. The zinc ion is important for dimerization.

It catalyses the reaction glycerol + ATP = sn-glycerol 3-phosphate + ADP + H(+). It participates in polyol metabolism; glycerol degradation via glycerol kinase pathway; sn-glycerol 3-phosphate from glycerol: step 1/1. Its activity is regulated as follows. Activity of this regulatory enzyme is affected by several metabolites. Allosterically and non-competitively inhibited by fructose 1,6-bisphosphate (FBP) and unphosphorylated phosphocarrier protein EIIA-Glc (III-Glc), an integral component of the bacterial phosphotransferase (PTS) system. Its function is as follows. Key enzyme in the regulation of glycerol uptake and metabolism. Catalyzes the phosphorylation of glycerol to yield sn-glycerol 3-phosphate. This Salmonella heidelberg (strain SL476) protein is Glycerol kinase.